The sequence spans 520 residues: 2-isopropylmalate synthase (520 aa).

The Pyruvate carboxyltransferase domain occupies Val-12–Met-274. Residues Asp-21, His-209, His-211, and Asn-245 each contribute to the Mn(2+) site. The tract at residues Arg-398 to Glu-520 is regulatory domain.

Belongs to the alpha-IPM synthase/homocitrate synthase family. LeuA type 1 subfamily. As to quaternary structure, homodimer. Requires Mn(2+) as cofactor.

The protein localises to the cytoplasm. It catalyses the reaction 3-methyl-2-oxobutanoate + acetyl-CoA + H2O = (2S)-2-isopropylmalate + CoA + H(+). The protein operates within amino-acid biosynthesis; L-leucine biosynthesis; L-leucine from 3-methyl-2-oxobutanoate: step 1/4. Functionally, catalyzes the condensation of the acetyl group of acetyl-CoA with 3-methyl-2-oxobutanoate (2-ketoisovalerate) to form 3-carboxy-3-hydroxy-4-methylpentanoate (2-isopropylmalate). In Methylobacterium nodulans (strain LMG 21967 / CNCM I-2342 / ORS 2060), this protein is 2-isopropylmalate synthase.